We begin with the raw amino-acid sequence, 469 residues long: Uronate isomerase (469 aa).

It belongs to the metallo-dependent hydrolases superfamily. Uronate isomerase family.

It carries out the reaction D-glucuronate = D-fructuronate. The catalysed reaction is aldehydo-D-galacturonate = keto-D-tagaturonate. The protein operates within carbohydrate metabolism; pentose and glucuronate interconversion. This Mesorhizobium japonicum (strain LMG 29417 / CECT 9101 / MAFF 303099) (Mesorhizobium loti (strain MAFF 303099)) protein is Uronate isomerase.